The sequence spans 441 residues: Tol-Pal system protein TolB (441 aa).

Residues Met-1–Ala-39 form the signal peptide.

This sequence belongs to the TolB family. As to quaternary structure, the Tol-Pal system is composed of five core proteins: the inner membrane proteins TolA, TolQ and TolR, the periplasmic protein TolB and the outer membrane protein Pal. They form a network linking the inner and outer membranes and the peptidoglycan layer.

It is found in the periplasm. In terms of biological role, part of the Tol-Pal system, which plays a role in outer membrane invagination during cell division and is important for maintaining outer membrane integrity. The protein is Tol-Pal system protein TolB of Bordetella bronchiseptica (strain ATCC BAA-588 / NCTC 13252 / RB50) (Alcaligenes bronchisepticus).